A 71-amino-acid chain; its full sequence is Translation initiation factor IF-1 (71 aa).

Residues 1-71 (MKEKNIEMQG…SKGRIIFRSR (71 aa)) enclose the S1-like domain.

Belongs to the IF-1 family. In terms of assembly, component of the 30S ribosomal translation pre-initiation complex which assembles on the 30S ribosome in the order IF-2 and IF-3, IF-1 and N-formylmethionyl-tRNA(fMet); mRNA recruitment can occur at any time during PIC assembly.

It localises to the cytoplasm. Its function is as follows. One of the essential components for the initiation of protein synthesis. Stabilizes the binding of IF-2 and IF-3 on the 30S subunit to which N-formylmethionyl-tRNA(fMet) subsequently binds. Helps modulate mRNA selection, yielding the 30S pre-initiation complex (PIC). Upon addition of the 50S ribosomal subunit IF-1, IF-2 and IF-3 are released leaving the mature 70S translation initiation complex. The protein is Translation initiation factor IF-1 of Buchnera aphidicola subsp. Cinara cedri (strain Cc).